The chain runs to 926 residues: Bifunctional uridylyltransferase/uridylyl-removing enzyme (926 aa).

The uridylyltransferase stretch occupies residues 1–379; the sequence is MPVSFLSLAS…PKSRRSGASK (379 aa). A uridylyl-removing region spans residues 380–736; that stretch reads QIDGFPVIQG…GHEMPAYDAT (357 aa). The region spanning 496–618 is the HD domain; the sequence is VDEHAIRALD…VKSPERLRLL (123 aa). 2 ACT domains span residues 737 to 814 and 849 to 926; these read MISL…IRSS and VIEV…ISEK.

It belongs to the GlnD family. The cofactor is Mg(2+).

The enzyme catalyses [protein-PII]-L-tyrosine + UTP = [protein-PII]-uridylyl-L-tyrosine + diphosphate. The catalysed reaction is [protein-PII]-uridylyl-L-tyrosine + H2O = [protein-PII]-L-tyrosine + UMP + H(+). Uridylyltransferase (UTase) activity is inhibited by glutamine, while glutamine activates uridylyl-removing (UR) activity. Functionally, modifies, by uridylylation and deuridylylation, the PII regulatory proteins (GlnB and homologs), in response to the nitrogen status of the cell that GlnD senses through the glutamine level. Under low glutamine levels, catalyzes the conversion of the PII proteins and UTP to PII-UMP and PPi, while under higher glutamine levels, GlnD hydrolyzes PII-UMP to PII and UMP (deuridylylation). Thus, controls uridylylation state and activity of the PII proteins, and plays an important role in the regulation of nitrogen assimilation and metabolism. The polypeptide is Bifunctional uridylyltransferase/uridylyl-removing enzyme (Zymomonas mobilis subsp. mobilis (strain ATCC 31821 / ZM4 / CP4)).